The sequence spans 553 residues: Glucose-6-phosphate isomerase (553 aa).

The Proton donor role is filled by Glu-357. Residues His-388 and Lys-514 contribute to the active site. Residues 527-553 (ADSPAAQSDSSTDALVRRYRTERGRTA) are disordered. Residues 541 to 553 (LVRRYRTERGRTA) are compositionally biased toward basic and acidic residues.

This sequence belongs to the GPI family.

The protein resides in the cytoplasm. It carries out the reaction alpha-D-glucose 6-phosphate = beta-D-fructose 6-phosphate. It participates in carbohydrate biosynthesis; gluconeogenesis. Its pathway is carbohydrate degradation; glycolysis; D-glyceraldehyde 3-phosphate and glycerone phosphate from D-glucose: step 2/4. Functionally, catalyzes the reversible isomerization of glucose-6-phosphate to fructose-6-phosphate. This chain is Glucose-6-phosphate isomerase, found in Mycolicibacterium vanbaalenii (strain DSM 7251 / JCM 13017 / BCRC 16820 / KCTC 9966 / NRRL B-24157 / PYR-1) (Mycobacterium vanbaalenii).